Reading from the N-terminus, the 500-residue chain is Ribose import ATP-binding protein RbsA (500 aa).

ABC transporter domains follow at residues Leu-6 to Lys-242 and Ala-252 to Asn-495. Gly-38 to Ser-45 serves as a coordination point for ATP.

Belongs to the ABC transporter superfamily. Ribose importer (TC 3.A.1.2.1) family. In terms of assembly, the complex is composed of an ATP-binding protein (RbsA), two transmembrane proteins (RbsC) and a solute-binding protein (RbsB).

The protein localises to the cell inner membrane. It catalyses the reaction D-ribose(out) + ATP + H2O = D-ribose(in) + ADP + phosphate + H(+). In terms of biological role, part of the ABC transporter complex RbsABC involved in ribose import. Responsible for energy coupling to the transport system. This Vibrio cholerae serotype O1 (strain ATCC 39315 / El Tor Inaba N16961) protein is Ribose import ATP-binding protein RbsA.